The primary structure comprises 185 residues: Thiol:disulfide interchange protein DsbE (185 aa).

Residues 1–4 (MKRN) lie on the Cytoplasmic side of the membrane. A helical membrane pass occupies residues 5-25 (VLLLPLLIFLLIAAALLWQLA). The Periplasmic portion of the chain corresponds to 26–185 (RNAQGDDPTN…WDRYSREAAQ (160 aa)). A Thioredoxin domain is found at 39–177 (ALTGKPVPAF…WESELKPLWD (139 aa)). Cysteines 80 and 83 form a disulfide.

The protein belongs to the thioredoxin family. DsbE subfamily.

It localises to the cell inner membrane. Functionally, involved in disulfide bond formation. Catalyzes a late, reductive step in the assembly of periplasmic c-type cytochromes, probably the reduction of disulfide bonds of the apocytochrome c to allow covalent linkage with the heme. Possible subunit of a heme lyase. This chain is Thiol:disulfide interchange protein DsbE (dsbE1), found in Salmonella typhi.